A 549-amino-acid chain; its full sequence is Undecaprenyl phosphate-alpha-4-amino-4-deoxy-L-arabinose arabinosyl transferase (549 aa).

12 helical membrane-spanning segments follow: residues 9 to 29 (LLLI…GLWI), 80 to 100 (LFGV…LAYL), 112 to 132 (SLAC…SGYA), 136 to 156 (PQFT…LDAG), 176 to 196 (FLTK…PYML), 204 to 224 (LLGY…PWAL), 256 to 276 (PWWF…GLLP), 288 to 308 (QAPV…FSLS), 312 to 332 (LPTY…HALV), 346 to 366 (NGLL…YLQL), 376 to 396 (FELF…LAQW), and 402 to 422 (AWAA…AAMP).

This sequence belongs to the glycosyltransferase 83 family.

It localises to the cell inner membrane. The catalysed reaction is 4-amino-4-deoxy-alpha-L-arabinopyranosyl di-trans,octa-cis-undecaprenyl phosphate + lipid IVA = lipid IIA + di-trans,octa-cis-undecaprenyl phosphate.. It functions in the pathway lipopolysaccharide metabolism; 4-amino-4-deoxy-beta-L-arabinose-lipid A biosynthesis. Its function is as follows. Catalyzes the transfer of the L-Ara4N moiety of the glycolipid undecaprenyl phosphate-alpha-L-Ara4N to lipid A. The modified arabinose is attached to lipid A and is required for resistance to polymyxin and cationic antimicrobial peptides. The chain is Undecaprenyl phosphate-alpha-4-amino-4-deoxy-L-arabinose arabinosyl transferase from Pseudomonas aeruginosa (strain ATCC 15692 / DSM 22644 / CIP 104116 / JCM 14847 / LMG 12228 / 1C / PRS 101 / PAO1).